A 58-amino-acid polypeptide reads, in one-letter code: Probable ferredoxin (58 aa).

4Fe-4S ferredoxin-type domains are found at residues 2 to 30 (VAKV…LNDD) and 31 to 58 (GIAT…ITIE). [4Fe-4S] cluster contacts are provided by C10, C13, C16, C20, C40, C43, C46, and C50.

[4Fe-4S] cluster serves as cofactor.

Functionally, ferredoxins are iron-sulfur proteins that transfer electrons in a wide variety of metabolic reactions. The chain is Probable ferredoxin from Methanosarcina thermophila.